A 298-amino-acid polypeptide reads, in one-letter code: N-acetylmuramic acid 6-phosphate etherase (298 aa).

The SIS domain maps to 55 to 218 (IHTQVSGGGR…STGLMIKSGK (164 aa)). Residue E83 is the Proton donor of the active site. Residue E114 is part of the active site.

The protein belongs to the GCKR-like family. MurNAc-6-P etherase subfamily. In terms of assembly, homodimer.

The enzyme catalyses N-acetyl-D-muramate 6-phosphate + H2O = N-acetyl-D-glucosamine 6-phosphate + (R)-lactate. Its pathway is amino-sugar metabolism; 1,6-anhydro-N-acetylmuramate degradation. The protein operates within amino-sugar metabolism; N-acetylmuramate degradation. It participates in cell wall biogenesis; peptidoglycan recycling. Functionally, specifically catalyzes the cleavage of the D-lactyl ether substituent of MurNAc 6-phosphate, producing GlcNAc 6-phosphate and D-lactate. Together with AnmK, is also required for the utilization of anhydro-N-acetylmuramic acid (anhMurNAc) either imported from the medium or derived from its own cell wall murein, and thus plays a role in cell wall recycling. The protein is N-acetylmuramic acid 6-phosphate etherase of Escherichia coli O127:H6 (strain E2348/69 / EPEC).